The sequence spans 79 residues: Crassicorin-I (79 aa).

Residues 1–19 (MKLFLVSIVLVGMLVLAAA) form the signal peptide. Residues 20-39 (RPERDIDSFDEQEEKGFVKR) constitute a propeptide that is removed on maturation. 3 disulfides stabilise this stretch: Cys43-Cys76, Cys45-Cys69, and Cys59-Cys77.

This sequence belongs to the sea anemone type 3 (BDS) potassium channel toxin family. Highly expressed by the mesenteries. Moderately expressed by the pharynx. Weakly expressed by the gonad and pedal disk. No expression in tentacle.

It is found in the secreted. Its subcellular location is the nematocyst. Peptide with both antimicrobial and neurotoxin activities. Cationic AMP with antibacterial activity against both Gram-positive bacteria (B.subtilis, MIC=11.49 ug/mL) and Gram-negative bacteria (E.coli (MIC=12.21 ug/mL) and S.enterica (MIC=11.95 ug/mL)). Shows no significant antimicrobial activity against bacteria S.aureus and P.aeruginosa, as well as the fungus C.albicans. In vivo, induces reversible paralytic activity towards the shrimp P.paucidens. May act by impairing sodium or potassium channels in the prey. The polypeptide is Crassicorin-I (Urticina crassicornis (Mottled anemone)).